The chain runs to 357 residues: Quinolinate synthase (357 aa).

Iminosuccinate contacts are provided by histidine 50 and serine 71. Cysteine 116 contributes to the [4Fe-4S] cluster binding site. Iminosuccinate contacts are provided by residues tyrosine 142–asparagine 144 and serine 159. Cysteine 203 provides a ligand contact to [4Fe-4S] cluster. Iminosuccinate contacts are provided by residues histidine 229–glutamate 231 and threonine 246. Cysteine 300 provides a ligand contact to [4Fe-4S] cluster.

Belongs to the quinolinate synthase family. Type 1 subfamily. [4Fe-4S] cluster serves as cofactor.

Its subcellular location is the cytoplasm. The enzyme catalyses iminosuccinate + dihydroxyacetone phosphate = quinolinate + phosphate + 2 H2O + H(+). It participates in cofactor biosynthesis; NAD(+) biosynthesis; quinolinate from iminoaspartate: step 1/1. In terms of biological role, catalyzes the condensation of iminoaspartate with dihydroxyacetone phosphate to form quinolinate. In Shewanella sp. (strain ANA-3), this protein is Quinolinate synthase.